We begin with the raw amino-acid sequence, 384 residues long: Proteinase K (384 aa).

The N-terminal stretch at 1 to 15 is a signal peptide; that stretch reads MRLSVLLSLLPLALG. Residues 16-105 constitute a propeptide that is removed on maturation; it reads APAVEQRSEA…IEQDAVVTIN (90 aa). The 66-residue stretch at 39–104 folds into the Inhibitor I9 domain; that stretch reads KYIVKFKEGS…YIEQDAVVTI (66 aa). In terms of domain architecture, Peptidase S8 spans 112–384; that stretch reads PWGLARISST…NLLAYNNYQA (273 aa). Threonine 121 serves as a coordination point for Ca(2+). A disulfide bridge links cysteine 139 with cysteine 228. Active-site charge relay system residues include aspartate 144 and histidine 174. Residues proline 280, valine 282, and aspartate 305 each coordinate Ca(2+). Cysteine 283 and cysteine 354 form a disulfide bridge. Serine 329 functions as the Charge relay system in the catalytic mechanism. Aspartate 365 is a Ca(2+) binding site.

This sequence belongs to the peptidase S8 family. Ca(2+) serves as cofactor.

It carries out the reaction Hydrolysis of keratin, and of other proteins with subtilisin-like specificity. Hydrolyzes peptide amides.. In terms of biological role, hydrolyzes keratin at aromatic and hydrophobic residues. The chain is Proteinase K (PROK) from Parengyodontium album (Tritirachium album).